The following is a 480-amino-acid chain: RAC-alpha serine/threonine-protein kinase (480 aa).

Positions alanine 5–aspartate 108 constitute a PH domain. An N6-acetyllysine mark is found at lysine 14 and lysine 20. Residue lysine 14 to isoleucine 19 coordinates 1D-myo-inositol 1,3,4,5-tetrakisphosphate. Residues arginine 23–arginine 25 and asparagine 53 each bind 1D-myo-inositol 1,3,4,5-tetrakisphosphate. Cysteine 60 and cysteine 77 are oxidised to a cystine. 1D-myo-inositol 1,3,4,5-tetrakisphosphate is bound at residue arginine 86. The segment at glutamate 114–serine 137 is disordered. The residue at position 124 (serine 124) is a Phosphoserine. 2 positions are modified to phosphoserine; alternate: serine 126 and serine 129. O-linked (GlcNAc) serine; alternate glycans are attached at residues serine 126 and serine 129. The 259-residue stretch at phenylalanine 150–phenylalanine 408 folds into the Protein kinase domain. Leucine 156–valine 164 serves as a coordination point for ATP. Position 176 is a phosphotyrosine; by TNK2 (tyrosine 176). Lysine 179 contributes to the ATP binding site. Aspartate 274 acts as the Proton acceptor in catalysis. A Glycyl lysine isopeptide (Lys-Gly) (interchain with G-Cter in ubiquitin) cross-link involves residue lysine 284. Cysteine 296 and cysteine 310 are joined by a disulfide. An O-linked (GlcNAc) threonine glycan is attached at threonine 305. The residue at position 308 (threonine 308) is a Phosphothreonine; by IKKE, PDPK1 and TBK1. Threonine 312 is a glycosylation site (O-linked (GlcNAc) threonine). In terms of domain architecture, AGC-kinase C-terminal spans alanine 409–alanine 480. Threonine 448 carries the phosphothreonine modification. Phosphothreonine; by MTOR is present on threonine 450. Residues threonine 450 to alanine 480 are disordered. O-linked (GlcNAc) serine; alternate glycosylation occurs at serine 473. Position 473 is a phosphoserine; by IKKE, MTOR, PRKDC and TBK1; alternate (serine 473). Phosphotyrosine is present on tyrosine 474. Serine 477 carries the phosphoserine; by CDK2 and MTOR modification. Threonine 479 bears the Phosphothreonine; by CDK2 and MTOR mark.

It belongs to the protein kinase superfamily. AGC Ser/Thr protein kinase family. RAC subfamily. In terms of assembly, interacts with and phosphorylated by PDPK1. Interacts with AGAP2 (isoform 2/PIKE-A); the interaction occurs in the presence of guanine nucleotides. Interacts with AKTIP. Interacts (via PH domain) with MTCP1, TCL1A and TCL1B. Interacts with CDKN1B; the interaction phosphorylates CDKN1B promoting 14-3-3 binding and cell-cycle progression. Interacts with MAP3K5 and TRAF6. Interacts with BAD, PPP2R5B, STK3 and STK4. Interacts (via PH domain) with SIRT1. Interacts with SRPK2 in a phosphorylation-dependent manner. Interacts with TRIM13; the interaction ubiquitinates AKT1 leading to its proteasomal degradation. Interacts with RAF1. Interacts (via the C-terminus) with CCDC88A (via its C-terminus) and THEM4 (via its C-terminus). Interacts with GRB10; the interaction leads to GRB10 phosphorylation thus promoting YWHAE-binding. Interacts with KCTD20. Interacts with BTBD10. Interacts with PA2G4. Interacts with KIF14; the interaction is detected in the plasma membrane upon INS stimulation and promotes AKT1 phosphorylation. Interacts with FAM83B; activates the PI3K/AKT signaling cascade. Interacts with WDFY2 (via WD repeats 1-3). Forms a complex with WDFY2 and FOXO1. Interacts with FAM168A. Interacts with SYAP1 (via phosphorylated form and BSD domain); this interaction is enhanced in a mTORC2-mediated manner in response to epidermal growth factor (EGF) stimulation and activates AKT1. Interacts with PKHM3. Interacts with FKBP5/FKBP51; promoting interaction between Akt/AKT1 and PHLPP1, thereby enhancing dephosphorylation and subsequent activation of Akt/AKT1. Interacts with TMEM175; leading to formation of the lysoK(GF) complex. In terms of processing, O-GlcNAcylation at Thr-305 and Thr-312 inhibits activating phosphorylation at Thr-308 via disrupting the interaction between AKT1 and PDPK1. O-GlcNAcylation at Ser-473 also probably interferes with phosphorylation at this site. Post-translationally, phosphorylation on Thr-308, Ser-473 and Tyr-474 is required for full activity. Phosphorylation of the activation loop at Thr-308 by PDPK1/PDK1 is a prerequisite for full activation. Phosphorylation by mTORC2 in response to growth factors plays a key role in AKT1 activation: mTORC2 phosphorylates different sites depending on the context, such as Thr-450, Ser-473, Ser-477 or Thr-479, thereby facilitating subsequent phosphorylation of the activation loop by PDPK1/PDK1. Phosphorylation at Ser-473 by mTORC2 promotes ubiquitination and degradation by the proteasome. Also phosphorylated at Ser-477 and Thr-479 by CDK2, facilitating subsequent phosphorylation of the activation loop by PDPK1/PDK1. Activated TNK2 phosphorylates it on Tyr-176 resulting in its binding to the anionic plasma membrane phospholipid PA. This phosphorylated form localizes to the cell membrane, where it is targeted by PDPK1 and PDPK2 for further phosphorylations on Thr-308 and Ser-473 leading to its activation. Phosphorylated at Thr-308 and Ser-473 by IKBKE and TBK1. Ser-473 phosphorylation is enhanced by interaction with AGAP2 isoform 2 (PIKE-A). Ser-473 phosphorylation is enhanced by signaling through activated FLT3. Ser-473 is dephosphorylated by PHLPP. Dephosphorylated at Thr-308 and Ser-473 by PP2A phosphatase. The phosphorylated form of PPP2R5B is required for bridging AKT1 with PP2A phosphatase. Ser-473 is dephosphorylated by CPPED1, leading to termination of signaling. AIM2 acts as an inhibitor of AKT1 by inhibiting phosphorylation Ser-473: AIM2 acts both by inhibiting the activity of PRKDC/DNA-PK kinase and promoting dephosphorylation by PP2A phosphatase. Ubiquitinated; undergoes both 'Lys-48'- and 'Lys-63'-linked polyubiquitination. TRAF6-induced 'Lys-63'-linked AKT1 ubiquitination is critical for phosphorylation and activation. When ubiquitinated, it translocates to the plasma membrane, where it becomes phosphorylated. When fully phosphorylated and translocated into the nucleus, undergoes 'Lys-48'-polyubiquitination catalyzed by TTC3, leading to its degradation by the proteasome. Also ubiquitinated by TRIM13 leading to its proteasomal degradation. Ubiquitinated via 'Lys-48'-linked polyubiquitination by ZNRF1, leading to its degradation by the proteasome. Phosphorylated, undergoes 'Lys-48'-linked polyubiquitination preferentially at Lys-284 catalyzed by MUL1, leading to its proteasomal degradation. In terms of processing, acetylated on Lys-14 and Lys-20 by the histone acetyltransferases EP300 and KAT2B. Acetylation results in reduced phosphorylation and inhibition of activity. Deacetylated at Lys-14 and Lys-20 by SIRT1. SIRT1-mediated deacetylation relieves the inhibition. Post-translationally, cleavage by caspase-3/CASP3. Cleaved at the caspase-3 consensus site Asp-462 during apoptosis, resulting in down-regulation of the AKT signaling pathway and decreased cell survival. In terms of tissue distribution, widely expressed. Low levels found in liver with slightly higher levels present in thymus and testis.

It localises to the cytoplasm. It is found in the nucleus. Its subcellular location is the cell membrane. The protein localises to the mitochondrion intermembrane space. The enzyme catalyses L-seryl-[protein] + ATP = O-phospho-L-seryl-[protein] + ADP + H(+). It catalyses the reaction L-threonyl-[protein] + ATP = O-phospho-L-threonyl-[protein] + ADP + H(+). Its activity is regulated as follows. Three specific sites, one in the kinase domain (Thr-308) and the two other ones in the C-terminal regulatory region (Ser-473 and Tyr-474), need to be phosphorylated for its full activation. AKT1 is one of 3 closely related serine/threonine-protein kinases (AKT1, AKT2 and AKT3) called the AKT kinase, and which regulate many processes including metabolism, proliferation, cell survival, growth and angiogenesis. This is mediated through serine and/or threonine phosphorylation of a range of downstream substrates. Over 100 substrate candidates have been reported so far, but for most of them, no isoform specificity has been reported. AKT is responsible of the regulation of glucose uptake by mediating insulin-induced translocation of the SLC2A4/GLUT4 glucose transporter to the cell surface. Phosphorylation of PTPN1 at 'Ser-50' negatively modulates its phosphatase activity preventing dephosphorylation of the insulin receptor and the attenuation of insulin signaling. Phosphorylation of TBC1D4 triggers the binding of this effector to inhibitory 14-3-3 proteins, which is required for insulin-stimulated glucose transport. AKT also regulates the storage of glucose in the form of glycogen by phosphorylating GSK3A at 'Ser-21' and GSK3B at 'Ser-9', resulting in inhibition of its kinase activity. Phosphorylation of GSK3 isoforms by AKT is also thought to be one mechanism by which cell proliferation is driven. AKT also regulates cell survival via the phosphorylation of MAP3K5 (apoptosis signal-related kinase). Phosphorylation of 'Ser-83' decreases MAP3K5 kinase activity stimulated by oxidative stress and thereby prevents apoptosis. AKT mediates insulin-stimulated protein synthesis by phosphorylating TSC2 at 'Ser-939' and 'Thr-1462', thereby activating the mTORC1 signaling pathway, and leading to both phosphorylation of 4E-BP1 and in activation of RPS6KB1. Also regulates the mTORC1 signaling pathway by catalyzing phosphorylation of CASTOR1 and DEPDC5. AKT plays a role as key modulator of the AKT-mTOR signaling pathway controlling the tempo of the process of newborn neurons integration during adult neurogenesis, including correct neuron positioning, dendritic development and synapse formation. Part of a positive feedback loop of mTORC2 signaling by mediating phosphorylation of MAPKAP1/SIN1, promoting mTORC2 activation. AKT is involved in the phosphorylation of members of the FOXO factors (Forkhead family of transcription factors), leading to binding of 14-3-3 proteins and cytoplasmic localization. In particular, FOXO1 is phosphorylated at 'Thr-24', 'Ser-256' and 'Ser-319'. FOXO3 and FOXO4 are phosphorylated on equivalent sites. AKT has an important role in the regulation of NF-kappa-B-dependent gene transcription and positively regulates the activity of CREB1 (cyclic AMP (cAMP)-response element binding protein). The phosphorylation of CREB1 induces the binding of accessory proteins that are necessary for the transcription of pro-survival genes such as BCL2 and MCL1. AKT phosphorylates 'Ser-454' on ATP citrate lyase (ACLY), thereby potentially regulating ACLY activity and fatty acid synthesis. Activates the 3B isoform of cyclic nucleotide phosphodiesterase (PDE3B) via phosphorylation of 'Ser-273', resulting in reduced cyclic AMP levels and inhibition of lipolysis. Phosphorylates PIKFYVE on 'Ser-318', which results in increased PI(3)P-5 activity. The Rho GTPase-activating protein DLC1 is another substrate and its phosphorylation is implicated in the regulation cell proliferation and cell growth. Signals downstream of phosphatidylinositol 3-kinase (PI(3)K) to mediate the effects of various growth factors such as platelet-derived growth factor (PDGF), epidermal growth factor (EGF), insulin and insulin-like growth factor 1 (IGF1). AKT mediates the antiapoptotic effects of IGF1. Essential for the SPATA13-mediated regulation of cell migration and adhesion assembly and disassembly. May be involved in the regulation of the placental development. Phosphorylates STK4/MST1 at 'Thr-120' and 'Thr-387' leading to inhibition of its: kinase activity, nuclear translocation, autophosphorylation and ability to phosphorylate FOXO3. Phosphorylates STK3/MST2 at 'Thr-117' and 'Thr-384' leading to inhibition of its: cleavage, kinase activity, autophosphorylation at Thr-180, binding to RASSF1 and nuclear translocation. Phosphorylates SRPK2 and enhances its kinase activity towards SRSF2 and ACIN1 and promotes its nuclear translocation. Phosphorylates RAF1 at 'Ser-259' and negatively regulates its activity. Phosphorylation of BAD stimulates its pro-apoptotic activity. Phosphorylates KAT6A at 'Thr-369' and this phosphorylation inhibits the interaction of KAT6A with PML and negatively regulates its acetylation activity towards p53/TP53. Phosphorylates palladin (PALLD), modulating cytoskeletal organization and cell motility. Phosphorylates prohibitin (PHB), playing an important role in cell metabolism and proliferation. Phosphorylates CDKN1A, for which phosphorylation at 'Thr-145' induces its release from CDK2 and cytoplasmic relocalization. These recent findings indicate that the AKT1 isoform has a more specific role in cell motility and proliferation. Phosphorylates CLK2 thereby controlling cell survival to ionizing radiation. Phosphorylates PCK1 at 'Ser-90', reducing the binding affinity of PCK1 to oxaloacetate and changing PCK1 into an atypical protein kinase activity using GTP as donor. Also acts as an activator of TMEM175 potassium channel activity in response to growth factors: forms the lysoK(GF) complex together with TMEM175 and acts by promoting TMEM175 channel activation, independently of its protein kinase activity. Acts as a negative regulator of the cGAS-STING pathway by mediating phosphorylation of CGAS during mitosis, leading to its inhibition. Acts as a regulator of mitochondrial calcium uptake by mediating phosphorylation of MICU1 in the mitochondrial intermembrane space, impairing MICU1 maturation. Acts as an inhibitor of tRNA methylation by mediating phosphorylation of the N-terminus of METTL1, thereby inhibiting METTL1 methyltransferase activity. In response to LPAR1 receptor pathway activation, phosphorylates Rabin8/RAB3IP which alters its activity and phosphorylates WDR44 which induces WDR44 binding to Rab11, thereby switching Rab11 vesicular function from preciliary trafficking to endocytic recycling. The sequence is that of RAC-alpha serine/threonine-protein kinase (Akt1) from Mus musculus (Mouse).